The sequence spans 84 residues: Acyl carrier protein homolog (84 aa).

Positions 4–79 constitute a Carrier domain; that stretch reads HEILLKIKEI…DLVLEVKNLL (76 aa). Ser39 is modified (O-(pantetheine 4'-phosphoryl)serine).

In terms of processing, 4'-phosphopantetheine is transferred from CoA to a specific serine of the apo-ACP-like protein.

It participates in lipid metabolism; fatty acid biosynthesis. Carrier of the growing fatty acid chain in fatty acid biosynthesis. The sequence is that of Acyl carrier protein homolog from Mycoplasma genitalium (strain ATCC 33530 / DSM 19775 / NCTC 10195 / G37) (Mycoplasmoides genitalium).